A 71-amino-acid chain; its full sequence is UPF0352 protein Ssed_1809 (71 aa).

Belongs to the UPF0352 family.

This is UPF0352 protein Ssed_1809 from Shewanella sediminis (strain HAW-EB3).